We begin with the raw amino-acid sequence, 450 residues long: Signal recognition particle 54 kDa protein (450 aa).

GTP is bound by residues Gly-107–Thr-114, Asp-188–Arg-192, and Thr-247–Asp-250.

The protein belongs to the GTP-binding SRP family. SRP54 subfamily. Part of the signal recognition particle protein translocation system, which is composed of SRP and FtsY. Archaeal SRP consists of a 7S RNA molecule of 300 nucleotides and two protein subunits: SRP54 and SRP19.

Its subcellular location is the cytoplasm. The enzyme catalyses GTP + H2O = GDP + phosphate + H(+). Its function is as follows. Involved in targeting and insertion of nascent membrane proteins into the cytoplasmic membrane. Binds to the hydrophobic signal sequence of the ribosome-nascent chain (RNC) as it emerges from the ribosomes. The SRP-RNC complex is then targeted to the cytoplasmic membrane where it interacts with the SRP receptor FtsY. This is Signal recognition particle 54 kDa protein from Methanococcus maripaludis (strain DSM 14266 / JCM 13030 / NBRC 101832 / S2 / LL).